Here is a 396-residue protein sequence, read N- to C-terminus: DNA polymerase IV (396 aa).

Positions 6 to 186 (IIHVDMDAFY…LPISRLWGVG (181 aa)) constitute a UmuC domain. Residues Asp10 and Asp104 each coordinate Mg(2+). Glu105 is an active-site residue.

This sequence belongs to the DNA polymerase type-Y family. As to quaternary structure, monomer. Mg(2+) serves as cofactor.

Its subcellular location is the cytoplasm. It catalyses the reaction DNA(n) + a 2'-deoxyribonucleoside 5'-triphosphate = DNA(n+1) + diphosphate. Its function is as follows. Poorly processive, error-prone DNA polymerase involved in untargeted mutagenesis. Copies undamaged DNA at stalled replication forks, which arise in vivo from mismatched or misaligned primer ends. These misaligned primers can be extended by PolIV. Exhibits no 3'-5' exonuclease (proofreading) activity. May be involved in translesional synthesis, in conjunction with the beta clamp from PolIII. The polypeptide is DNA polymerase IV (Desulfatibacillum aliphaticivorans).